We begin with the raw amino-acid sequence, 325 residues long: Treponemal membrane protein B (325 aa).

The signal sequence occupies residues M1–A24. The EAARKAAE repeat unit spans residues E159–E166. The ARKLEEQRIAAQKAQEERKRAEE repeat unit spans residues A167–E189. The disordered stretch occupies residues A176–R224. One copy of the EAARKAAE repeat lies at E190 to E197. An ARKLEEQRIAAQKAQEERKRAEE repeat occupies A198–E220. An EAARKAAE repeat occupies E221 to E228. Residues E229–E236 form an EAARKAEE repeat.

It to T.phagedenis TmpB.

It is found in the cell outer membrane. Its function is as follows. Tmp may serve as a porin or transport protein for large molecules. This chain is Treponemal membrane protein B (tmpB), found in Treponema pallidum (strain Nichols).